A 273-amino-acid polypeptide reads, in one-letter code: Urease accessory protein UreD (273 aa).

It belongs to the UreD family. UreD, UreF and UreG form a complex that acts as a GTP-hydrolysis-dependent molecular chaperone, activating the urease apoprotein by helping to assemble the nickel containing metallocenter of UreC. The UreE protein probably delivers the nickel.

It localises to the cytoplasm. In terms of biological role, required for maturation of urease via the functional incorporation of the urease nickel metallocenter. The chain is Urease accessory protein UreD from Rhizobium leguminosarum bv. viciae.